A 289-amino-acid chain; its full sequence is Acetyl-coenzyme A carboxylase carboxyl transferase subunit beta 2 (289 aa).

Residues 25-289 (VWTKCPSCEQ…TNKSIQPEAE (265 aa)) form the CoA carboxyltransferase N-terminal domain. C29, C32, C48, and C51 together coordinate Zn(2+). A C4-type zinc finger spans residues 29-51 (CPSCEQVLYRIALKENLEVCPKC).

This sequence belongs to the AccD/PCCB family. Acetyl-CoA carboxylase is a heterohexamer composed of biotin carboxyl carrier protein (AccB), biotin carboxylase (AccC) and two subunits each of ACCase subunit alpha (AccA) and ACCase subunit beta (AccD). The cofactor is Zn(2+).

Its subcellular location is the cytoplasm. It catalyses the reaction N(6)-carboxybiotinyl-L-lysyl-[protein] + acetyl-CoA = N(6)-biotinyl-L-lysyl-[protein] + malonyl-CoA. It functions in the pathway lipid metabolism; malonyl-CoA biosynthesis; malonyl-CoA from acetyl-CoA: step 1/1. Its function is as follows. Component of the acetyl coenzyme A carboxylase (ACC) complex. Biotin carboxylase (BC) catalyzes the carboxylation of biotin on its carrier protein (BCCP) and then the CO(2) group is transferred by the transcarboxylase to acetyl-CoA to form malonyl-CoA. The polypeptide is Acetyl-coenzyme A carboxylase carboxyl transferase subunit beta 2 (Vibrio campbellii (strain ATCC BAA-1116)).